A 271-amino-acid chain; its full sequence is Ubiquitin thioesterase OTUB1 (271 aa).

Alanine 2 is modified (N-acetylalanine). A Phosphoserine modification is found at serine 16. Residue tyrosine 26 is modified to Phosphotyrosine. The 192-residue stretch at serine 80–lysine 271 folds into the OTU domain. Aspartate 88 is a catalytic residue. The Nucleophile role is filled by cysteine 91. Ubiquitin-conjugating enzyme E2 binding regions lie at residues phenylalanine 130–phenylalanine 138 and aspartate 169–leucine 177. The free ubiquitin binding stretch occupies residues phenylalanine 189–glutamate 195. Positions glutamine 206–lysine 213 are ubiquitin-conjugating enzyme E2 binding. 2 free ubiquitin binding regions span residues glutamate 214–isoleucine 221 and asparagine 245–glutamate 251. Residue histidine 265 is part of the active site.

It belongs to the peptidase C65 family. In terms of assembly, interacts with RNF128. Forms a ternary complex with RNF128 and USP8. Interacts with FUS and RACK1. Interacts with UBE2D1/UBCH5A, UBE2W/UBC16 and UBE2N/UBC13. In terms of processing, phosphorylation at Tyr-26 by SRC and SRMS promotes deubiquitination of RPTOR via a non-catalytic process.

The protein resides in the cytoplasm. It carries out the reaction Thiol-dependent hydrolysis of ester, thioester, amide, peptide and isopeptide bonds formed by the C-terminal Gly of ubiquitin (a 76-residue protein attached to proteins as an intracellular targeting signal).. Its activity is regulated as follows. By free ubiquitin: binding of free ubiquitin triggers conformational changes in the OTU domain and formation of a ubiquitin-binding helix in the N-terminus, promoting binding of the conjugated donor ubiquitin in UBE2N/UBC13 to OTUB1. In terms of biological role, hydrolase that can specifically remove compared to 'Lys-48'-linked conjugated ubiquitin from proteins and plays an important regulatory role at the level of protein turnover by preventing degradation. Regulator of T-cell anergy, a phenomenon that occurs when T-cells are rendered unresponsive to antigen rechallenge and no longer respond to their cognate antigen. Acts via its interaction with RNF128/GRAIL. Surprisingly, it regulates RNF128-mediated ubiquitination, but does not deubiquitinate polyubiquitinated RNF128. Deubiquitinates estrogen receptor alpha (ESR1). Mediates deubiquitination of 'Lys-48'-linked polyubiquitin chains, but not 'Lys-63'-linked polyubiquitin chains. Not able to cleave di-ubiquitin. Also capable of removing NEDD8 from NEDD8 conjugates, but with a much lower preference compared to 'Lys-48'-linked ubiquitin. Its function is as follows. Plays a key non-catalytic role in DNA repair regulation by inhibiting activity of RNF168, an E3 ubiquitin-protein ligase that promotes accumulation of 'Lys-63'-linked histone H2A and H2AX at DNA damage sites. Inhibits RNF168 independently of ubiquitin thioesterase activity by binding and inhibiting UBE2N/UBC13, the E2 partner of RNF168, thereby limiting spreading of 'Lys-63'-linked histone H2A and H2AX marks. Inhibition occurs by binding to free ubiquitin: free ubiquitin acts as an allosteric regulator that increases affinity for UBE2N/UBC13 and disrupts interaction with UBE2V1. The OTUB1-UBE2N/UBC13-free ubiquitin complex adopts a configuration that mimics a cleaved 'Lys48'-linked di-ubiquitin chain. Acts as a regulator of mTORC1 and mTORC2 complexes. When phosphorylated at Tyr-26, acts as an activator of the mTORC1 complex by mediating deubiquitination of RPTOR via a non-catalytic process: acts by binding and inhibiting the activity of the ubiquitin-conjugating enzyme E2 (UBE2D1/UBCH5A, UBE2W/UBC16 and UBE2N/UBC13), thereby preventing ubiquitination of RPTOR. Can also act as an inhibitor of the mTORC1 and mTORC2 complexes in response to amino acids by mediating non-catalytic deubiquitination of DEPTOR. The chain is Ubiquitin thioesterase OTUB1 (Otub1) from Mus musculus (Mouse).